The primary structure comprises 487 residues: N-succinylglutamate 5-semialdehyde dehydrogenase (487 aa).

221–226 (GSSRTG) lines the NAD(+) pocket. Active-site residues include Glu244 and Cys278.

The protein belongs to the aldehyde dehydrogenase family. AstD subfamily.

The catalysed reaction is N-succinyl-L-glutamate 5-semialdehyde + NAD(+) + H2O = N-succinyl-L-glutamate + NADH + 2 H(+). It participates in amino-acid degradation; L-arginine degradation via AST pathway; L-glutamate and succinate from L-arginine: step 4/5. Functionally, catalyzes the NAD-dependent reduction of succinylglutamate semialdehyde into succinylglutamate. This is N-succinylglutamate 5-semialdehyde dehydrogenase from Pseudomonas putida (strain ATCC 47054 / DSM 6125 / CFBP 8728 / NCIMB 11950 / KT2440).